A 72-amino-acid polypeptide reads, in one-letter code: MQKLIILLLVAAVLMSTQALFQEKRPMKKIDFLSKGKTDAEKQQKRSCSDDWQYCESPTDCCSWDCDVVCSG.

The signal sequence occupies residues 1–19 (MQKLIILLLVAAVLMSTQA). Positions 20-44 (LFQEKRPMKKIDFLSKGKTDAEKQQ) are excised as a propeptide. Cystine bridges form between Cys48/Cys62, Cys55/Cys66, and Cys61/Cys70. At Glu56 the chain carries 4-carboxyglutamate. 4-hydroxyproline is present on Pro58. Ser71 is subject to Serine amide.

Belongs to the conotoxin O2 superfamily. Post-translationally, brominated at one of the Trp residues. Expressed by the venom duct.

Its subcellular location is the secreted. The chain is Conotoxin Gla(2)-TxVI/A from Conus textile (Cloth-of-gold cone).